A 976-amino-acid polypeptide reads, in one-letter code: Chloride channel protein 1 (976 aa).

Topologically, residues 1–118 are cytoplasmic; it reads MQPSQSLRRG…VVRRKLGEDW (118 aa). The segment at 71–92 is disordered; the sequence is DKEQDTGMSKKMGSSESMDSKD. A compositionally biased stretch (low complexity) spans 77–87; it reads GMSKKMGSSES. A helical membrane pass occupies residues 119–150; it reads IFLVLLGLLMALVSWSMDYVSAKSLQAYKWSY. The Extracellular portion of the chain corresponds to 151–158; it reads YQMQPNLP. Residues 159–179 form a helical membrane-spanning segment; sequence LQYLVWVTFPLTLILFSAVFC. The Cytoplasmic portion of the chain corresponds to 180–183; sequence HLIS. Residues 184 to 189 constitute an intramembrane region (note=Loop between two helices); sequence PQAVGS. The short motif at 188-192 is the Selectivity filter part_1 element; it reads GSGIP. Ser-189 contributes to the chloride binding site. The helical intramembrane region spans 190–195; it reads GIPEMK. Over 196–208 the chain is Cytoplasmic; sequence TILRGVILKEYLT. Residues 209–224 constitute an intramembrane region (helical); the sequence is LKAFVAKVVALTAGLG. The note=Loop between two helices intramembrane region spans 225 to 230; sequence SGIPVG. A Selectivity filter part_2 motif is present at residues 230–234; the sequence is GKEGP. Positions 231-246 form an intramembrane region, helical; it reads KEGPFVHIASICAAVL. Residues 247-268 lie on the Cytoplasmic side of the membrane; sequence SKFMSMFCGVYEQPYYYTDMLT. 2 intramembrane regions (helical) span residues 269–280 and 281–290; these read VGCAVGVGCCFG and TPLGGVLFSI. Residues 291–301 lie on the Cytoplasmic side of the membrane; that stretch reads EVTSTYFAVRN. A helical membrane pass occupies residues 302 to 321; that stretch reads YWRGFFAATFSAFVFRVLAV. At 322-347 the chain is on the extracellular side; the sequence is WNKDAVTITALFRTNFRMDFPFDLQE. A helical transmembrane segment spans residues 348 to 376; the sequence is LPAFAIIGICCGFLGAVFVYLHRQVMLGV. Topologically, residues 377-390 are cytoplasmic; the sequence is RKHKALSQFLAKHR. A helical membrane pass occupies residues 391–408; that stretch reads LLYPGIVTFIIASFTFPP. Residues 409 to 414 are Extracellular-facing; that stretch reads GIGQFM. The segment at residues 415 to 418 is an intramembrane region (note=Loop between two helices); sequence AGEL. Positions 419-426 form an intramembrane region, helical; sequence MPREAIST. Residues 427–457 lie on the Extracellular side of the membrane; the sequence is LFDNNTWVKHVGDPESLGRSAVWIHPRVNVI. Positions 458 to 475 form an intramembrane region, helical; the sequence is IIIFLFFIMKFWMSIVAT. Positions 476 to 482 form an intramembrane region, note=Loop between two helices; that stretch reads TMPIPCG. The Selectivity filter part_3 signature appears at 482 to 486; it reads GGFMP. Residues 483–498 constitute an intramembrane region (helical); sequence GFMPVFVLGAAFGRLV. Phe-484 provides a ligand contact to chloride. Over 499-521 the chain is Extracellular; it reads GEIMAMLFPDGILFDDIIYKILP. Positions 522 to 538 form an intramembrane region, helical; it reads GGYAVIGAAALTGAVSH. An intramembrane region (note=Loop between two helices) is located at residues 539-540; the sequence is TV. Positions 541–554 form an intramembrane region, helical; sequence STAVICFELTGQIA. The Extracellular portion of the chain corresponds to 555–557; the sequence is HIL. The helical intramembrane region spans 558-571; it reads PMMVAVILANMVAQ. Positions 572-575 form an intramembrane region, note=Loop between two helices; it reads SLQP. The helical intramembrane region spans 576-578; sequence SLY. Tyr-578 contributes to the chloride binding site. The Cytoplasmic segment spans residues 579–976; it reads DSIIQVKKLP…DEEDEDELIL (398 aa). Positions 609–668 constitute a CBS 1 domain; the sequence is MVRDVKFVSATCTYGELRTLLQTTTVKTLPLVDSKDSMILLGSVERSELQSLLQRHLGPE. Residues 707 to 759 form a disordered region; the sequence is DEDEDEDLSGKPELPPLPPPHPLPSAPLSSEESNGPLPSHKQQPEAPEPADQR. Residues 719 to 731 show a composition bias toward pro residues; sequence ELPPLPPPHPLPS. A CBS 2 domain is found at 816 to 871; sequence IDQSPFQLVEQTSLHKTHTLFSLLGLHLAYVTSMGKLRGVLALEELQKAIEGHTKS. A disordered region spans residues 872–976; it reads GVQLRPPLAS…DEEDEDELIL (105 aa). Ser-881 is subject to Phosphoserine. Pro residues predominate over residues 914-925; that stretch reads SPEPPAPSPSPA. 2 stretches are compositionally biased toward acidic residues: residues 938-955 and 967-976; these read ELEELELGESPGLEEELA and DEEDEDELIL.

It belongs to the chloride channel (TC 2.A.49) family. ClC-1/CLCN1 subfamily. As to quaternary structure, homodimer.

The protein resides in the cell membrane. The protein localises to the sarcolemma. It localises to the T-tubule. The enzyme catalyses chloride(in) = chloride(out). It carries out the reaction thiocyanate(in) = thiocyanate(out). The catalysed reaction is bromide(in) = bromide(out). It catalyses the reaction nitrate(in) = nitrate(out). The enzyme catalyses iodide(out) = iodide(in). Its activity is regulated as follows. Modulated by membrane voltage with depolarization favouring channel opening and hyperpolarization favouring channel closure. Inhibited by acidic pH and ATP binding due to a shift of voltage dependence of common gating to more positive voltages. Inhibited by 9-anthracene-carboxylic. Its function is as follows. Voltage-gated chloride channel involved in skeletal muscle excitability. Generates most of the plasma membrane chloride conductance in skeletal muscle fibers, stabilizes the resting membrane potential and contributes to the repolarization phase during action potential firing. Forms a homodimeric channel where each subunit has its own ion conduction pathway. Conducts double-barreled currents controlled by two types of gates, two fast glutamate gates that control each subunit independently and a slow common gate that opens and shuts off both subunits simultaneously. Has a significant open probability at muscle resting potential and is further activated upon membrane depolarization. Permeable to small monovalent anions with ion selectivity for chloride &gt; thiocyanate &gt; bromide &gt; nitrate &gt; iodide. The polypeptide is Chloride channel protein 1 (CLCN1) (Canis lupus familiaris (Dog)).